A 120-amino-acid polypeptide reads, in one-letter code: Histone H2B (120 aa).

The tract at residues M1–K26 is disordered. A2 is subject to Blocked amino end (Ala). Residues K7, K10, and K11 each carry the N6-acetyllysine modification. K115 participates in a covalent cross-link: Glycyl lysine isopeptide (Lys-Gly) (interchain with G-Cter in ubiquitin).

This sequence belongs to the histone H2B family. The nucleosome is a histone octamer containing two molecules each of H2A, H2B, H3 and H4 assembled in one H3-H4 heterotetramer and two H2A-H2B heterodimers. The octamer wraps approximately 147 bp of DNA. In terms of processing, can be acetylated to form H2BK6ac, H2BK33ac and H2BK34ac. Monoubiquitinated to form H2BK143ub1; may give a specific tag for epigenetic transcriptional activation.

The protein resides in the nucleus. It is found in the chromosome. Its function is as follows. Core component of nucleosome. Nucleosomes wrap and compact DNA into chromatin, limiting DNA accessibility to the cellular machineries which require DNA as a template. Histones thereby play a central role in transcription regulation, DNA repair, DNA replication and chromosomal stability. DNA accessibility is regulated via a complex set of post-translational modifications of histones, also called histone code, and nucleosome remodeling. This chain is Histone H2B, found in Pisum sativum (Garden pea).